The chain runs to 568 residues: Oxygen-dependent choline dehydrogenase (568 aa).

Residue 8 to 37 coordinates FAD; it reads DYIIIGAGSAGNTLAARLTEDAGVTVLLLE. Histidine 477 (proton acceptor) is an active-site residue.

This sequence belongs to the GMC oxidoreductase family. The cofactor is FAD.

The catalysed reaction is choline + A = betaine aldehyde + AH2. The enzyme catalyses betaine aldehyde + NAD(+) + H2O = glycine betaine + NADH + 2 H(+). It functions in the pathway amine and polyamine biosynthesis; betaine biosynthesis via choline pathway; betaine aldehyde from choline (cytochrome c reductase route): step 1/1. Involved in the biosynthesis of the osmoprotectant glycine betaine. Catalyzes the oxidation of choline to betaine aldehyde and betaine aldehyde to glycine betaine at the same rate. This chain is Oxygen-dependent choline dehydrogenase, found in Pseudomonas syringae pv. tomato (strain ATCC BAA-871 / DC3000).